The primary structure comprises 89 residues: Small ribosomal subunit protein uS15 (89 aa).

Positions Met1–Ala20 are enriched in basic and acidic residues. The disordered stretch occupies residues Met1–Ser24.

It belongs to the universal ribosomal protein uS15 family. Part of the 30S ribosomal subunit. Forms a bridge to the 50S subunit in the 70S ribosome, contacting the 23S rRNA.

Its function is as follows. One of the primary rRNA binding proteins, it binds directly to 16S rRNA where it helps nucleate assembly of the platform of the 30S subunit by binding and bridging several RNA helices of the 16S rRNA. Forms an intersubunit bridge (bridge B4) with the 23S rRNA of the 50S subunit in the ribosome. The polypeptide is Small ribosomal subunit protein uS15 (Phenylobacterium zucineum (strain HLK1)).